The primary structure comprises 414 residues: Inositol-tetrakisphosphate 1-kinase (414 aa).

Lysine 18 contributes to the 1D-myo-inositol 1,3,4-trisphosphate binding site. Arginine 106 and lysine 157 together coordinate ATP. The ATP-grasp domain maps to 117–325; sequence EAYMEDDRIC…IATVLQGQST (209 aa). 1D-myo-inositol 1,3,4-trisphosphate is bound by residues histidine 167 and lysine 199. ATP-binding positions include 188-199, serine 214, serine 232, and serine 236; that span reads QNFINHNAVLYK. The Mg(2+) site is built by aspartate 281, aspartate 295, and asparagine 297. Position 297 (asparagine 297) interacts with 1D-myo-inositol 1,3,4-trisphosphate. 2 positions are modified to N6-acetyllysine; by EP300 and CREBBP: lysine 340 and lysine 383. The residue at position 396 (serine 396) is a Phosphoserine. Lysine 410 carries the N6-acetyllysine; by EP300 and CREBBP modification.

The protein belongs to the ITPK1 family. As to quaternary structure, monomer. Interacts with GPS1/COPS1. The cofactor is Mg(2+). Acetylation by EP300 and CREBBP destabilizes ITPK1, and down-regulates enzymatic activity. Deacetylated by SIRT1. As to expression, expressed in brain &gt; heart &gt; skeletal muscle = kidney = pancreas = liver = placenta &gt; lung. In brain, it is expressed in cerebellum, cerebral cortex, medulla, spinal cord, occipital lobe, frontal lobe, temporal lobe and putamen.

The enzyme catalyses 1D-myo-inositol 3,4,5,6-tetrakisphosphate + ATP = 1D-myo-inositol 1,3,4,5,6-pentakisphosphate + ADP + H(+). It catalyses the reaction 1D-myo-inositol 1,3,4-trisphosphate + ATP = 1D-myo-inositol 1,3,4,5-tetrakisphosphate + ADP + H(+). The catalysed reaction is 1D-myo-inositol 1,3,4-trisphosphate + ATP = 1D-myo-inositol 1,3,4,6-tetrakisphosphate + ADP + H(+). It carries out the reaction 1D-myo-inositol 3,4,6-trisphosphate + ATP = 1D-myo-inositol 1,3,4,6-tetrakisphosphate + ADP + H(+). The enzyme catalyses 1D-myo-inositol 1,3,4-trisphosphate + 1D-myo-inositol 1,3,4,5,6-pentakisphosphate = 1D-myo-inositol 3,4,5,6-tetrakisphosphate + 1D-myo-inositol 1,3,4,6-tetrakisphosphate. It catalyses the reaction 1D-myo-inositol 1,3,4-trisphosphate + 1D-myo-inositol 1,3,4,5,6-pentakisphosphate = 1D-myo-inositol 3,4,5,6-tetrakisphosphate + 1D-myo-inositol 1,3,4,5-tetrakisphosphate. Its function is as follows. Kinase that can phosphorylate various inositol polyphosphate such as Ins(3,4,5,6)P4 or Ins(1,3,4)P3. Phosphorylates Ins(3,4,5,6)P4 at position 1 to form Ins(1,3,4,5,6)P5. This reaction is thought to have regulatory importance, since Ins(3,4,5,6)P4 is an inhibitor of plasma membrane Ca(2+)-activated Cl(-) channels, while Ins(1,3,4,5,6)P5 is not. Also phosphorylates Ins(1,3,4)P3 on O-5 and O-6 to form Ins(1,3,4,6)P4, an essential molecule in the hexakisphosphate (InsP6) pathway. Also acts as an inositol polyphosphate phosphatase that dephosphorylates Ins(1,3,4,5)P4 and Ins(1,3,4,6)P4 to Ins(1,3,4)P3, and Ins(1,3,4,5,6)P5 to Ins(3,4,5,6)P4. May also act as an isomerase that interconverts the inositol tetrakisphosphate isomers Ins(1,3,4,5)P4 and Ins(1,3,4,6)P4 in the presence of ADP and magnesium. Probably acts as the rate-limiting enzyme of the InsP6 pathway. Modifies TNF-alpha-induced apoptosis by interfering with the activation of TNFRSF1A-associated death domain. Plays an important role in MLKL-mediated necroptosis. Produces highly phosphorylated inositol phosphates such as inositolhexakisphosphate (InsP6) which bind to MLKL mediating the release of an N-terminal auto-inhibitory region leading to its activation. Essential for activated phospho-MLKL to oligomerize and localize to the cell membrane during necroptosis. This Homo sapiens (Human) protein is Inositol-tetrakisphosphate 1-kinase.